We begin with the raw amino-acid sequence, 101 residues long: uncharacterized protein (101 aa).

Its subcellular location is the mitochondrion. This is an uncharacterized protein from Arabidopsis thaliana (Mouse-ear cress).